We begin with the raw amino-acid sequence, 624 residues long: uncharacterized protein (624 aa).

The disordered stretch occupies residues 113 to 249; the sequence is SINVRTSATT…RFHPVTDINK (137 aa). Residues 118-225 are compositionally biased toward low complexity; that stretch reads TSATTTESTN…ATTTESTNAS (108 aa). The segment covering 226 to 249 has biased composition (basic and acidic residues); that stretch reads AKEDANKDGNAEDNRFHPVTDINK.

This is an uncharacterized protein from Saccharomyces cerevisiae (strain ATCC 204508 / S288c) (Baker's yeast).